Here is a 275-residue protein sequence, read N- to C-terminus: MSLVLAVYGKGGIGKSTTSANISAALALKGAKVLQIGCDPKHDSTFPITGKLQKTVIEALEEVDFHHEELTAEDVIETGFAGIDGLEAGGPPAGSGCGGYVVGESVTLLQELGLYDKYDVILFDVLGDVVCGGFSAPLNYADYAIIIATNDFDSIFAANRLCMAIQQKSVRYKVKLAGIVANRVDYTTGGGTNMLDQFAEKVGTRLLAKVPYHELIRKSRFAGKTLFAMEDTPGKDECLVPYNEIAETLMQENTPASIPEPIGDREIFEIVGGWQ.

ATP-binding positions include 12-17 (GIGKST) and Lys-41. Mg(2+) is bound at residue Ser-16. The [4Fe-4S] cluster site is built by Cys-97 and Cys-131. 182 to 183 (NR) lines the ATP pocket.

Belongs to the NifH/BchL/ChlL family. Homodimer. Protochlorophyllide reductase is composed of three subunits; BchL, BchN and BchB. Requires [4Fe-4S] cluster as cofactor.

It catalyses the reaction chlorophyllide a + oxidized 2[4Fe-4S]-[ferredoxin] + 2 ADP + 2 phosphate = protochlorophyllide a + reduced 2[4Fe-4S]-[ferredoxin] + 2 ATP + 2 H2O. Its pathway is porphyrin-containing compound metabolism; bacteriochlorophyll biosynthesis (light-independent). Functionally, component of the dark-operative protochlorophyllide reductase (DPOR) that uses Mg-ATP and reduced ferredoxin to reduce ring D of protochlorophyllide (Pchlide) to form chlorophyllide a (Chlide). This reaction is light-independent. The L component serves as a unique electron donor to the NB-component of the complex, and binds Mg-ATP. This is Light-independent protochlorophyllide reductase iron-sulfur ATP-binding protein from Chlorobium phaeovibrioides (strain DSM 265 / 1930) (Prosthecochloris vibrioformis (strain DSM 265)).